Consider the following 258-residue polypeptide: Regulatory protein RecX (258 aa).

Belongs to the RecX family.

The protein resides in the cytoplasm. Its function is as follows. Modulates RecA activity. The protein is Regulatory protein RecX of Streptococcus thermophilus (strain ATCC BAA-491 / LMD-9).